We begin with the raw amino-acid sequence, 359 residues long: 4-galactosyl-N-acetylglucosaminide 3-alpha-L-fucosyltransferase FUT6 (359 aa).

Residues 1-14 are Cytoplasmic-facing; it reads MDPLGPAKTQWSWR. Residues 15-34 form a helical; Signal-anchor for type II membrane protein membrane-spanning segment; sequence CCLTALLFQLLVAVCFFSYL. The Lumenal portion of the chain corresponds to 35-359; it reads RVSRDDPTVY…QTRSIAAWFT (325 aa). The interval 73–112 is determines site-specific fucosylation; sequence KPIALPRCSEMVPGTADCNITADRKVYPQADAVIVHHREV. Residues Asn-91, Asn-153, and Asn-184 are each glycosylated (N-linked (GlcNAc...) asparagine).

It belongs to the glycosyltransferase 10 family. Homodimer and monomer. Monomer (secreted form). N-glycosylated. In terms of processing, proteolytic cleavage releases a secreted glycoform of 43 kDa.

Its subcellular location is the golgi apparatus. It localises to the golgi stack membrane. The protein resides in the secreted. It catalyses the reaction a beta-D-galactosyl-(1-&gt;4)-N-acetyl-beta-D-glucosaminyl derivative + GDP-beta-L-fucose = a beta-D-galactosyl-(1-&gt;4)-[alpha-L-fucosyl-(1-&gt;3)]-N-acetyl-beta-D-glucosaminyl derivative + GDP + H(+). The enzyme catalyses an N-acetyl-alpha-neuraminyl-(2-&gt;3)-beta-D-galactosyl-(1-&gt;4)-N-acetyl-beta-D-glucosaminyl derivative + GDP-beta-L-fucose = an alpha-Neu5Ac-(2-&gt;3)-beta-D-Gal-(1-&gt;4)-[alpha-L-Fuc-(1-&gt;3)]-beta-D-GlcNAc derivative + GDP + H(+). The catalysed reaction is an alpha-Neu5Ac-(2-&gt;3)-beta-D-Gal-(1-&gt;4)-beta-D-GlcNAc-(1-&gt;3)-beta-D-Gal-(1-&gt;4)-[alpha-L-Fuc-(1-&gt;3)]-beta-D-GlcNAc derivative + GDP-beta-L-fucose = an alpha-Neu5Ac-(2-&gt;3)-beta-D-Gal-(1-&gt;4)-[alpha-L-Fuc-(1-&gt;3)]-beta-D-GlcNAc-(1-&gt;3)-beta-D-Gal-(1-&gt;4)-[alpha-L-Fuc-(1-&gt;3)]-beta-D-GlcNAc derivative + GDP + H(+). It carries out the reaction a neolactoside nLc6Cer + GDP-beta-L-fucose = beta-D-Gal-(1-&gt;4)-[alpha-L-Fuc-(1-&gt;3)]-beta-D-GlcNAc-(1-&gt;3)-beta-D-Gal-(1-&gt;4)-beta-D-GlcNAc-(1-&gt;3)-beta-D-Gal-(1-&gt;4)-beta-D-Glc-(1&lt;-&gt;1')-Cer + GDP + H(+). It catalyses the reaction a neolactoside nLc6Cer + GDP-beta-L-fucose = beta-D-galactosyl-(1-&gt;4)-N-acetyl-beta-D-glucosaminyl-(1-&gt;3)-beta-D-galactosyl-(1-&gt;4)-[alpha-L-fucosyl-(1-&gt;3)]-N-acetyl-beta-D-glucosaminyl-(1-&gt;3)-beta-D-galactosyl-(1-&gt;4)-beta-D-glucosyl-(1&lt;-&gt;1')-ceramide + GDP + H(+). The enzyme catalyses a neolactoside VI(3)-alpha-NeuNAc-nLc6Cer + GDP-beta-L-fucose = a neolactoside VI(3)-alpha-NeuAc,V(3)-alphaFuc-nLc6Cer + GDP + H(+). The catalysed reaction is beta-D-galactosyl-(1-&gt;4)-N-acetyl-D-glucosamine + GDP-beta-L-fucose = beta-D-galactosyl-(1-&gt;4)-[alpha-L-fucosyl-(1-&gt;3)]-N-acetyl-D-glucosamine + GDP + H(+). It carries out the reaction N-acetyl-alpha-neuraminosyl-(2-&gt;3)-beta-D-galactosyl-(1-&gt;4)-N-acetyl-beta-D-glucosamine + GDP-beta-L-fucose = N-acetyl-alpha-neuraminosyl-(2-&gt;3)-beta-D-galactosyl-(1-&gt;4)-[alpha-L-fucosyl-(1-&gt;3)]-N-acetyl-beta-D-glucosamine + GDP + H(+). It catalyses the reaction lactose + GDP-beta-L-fucose = beta-D-galactosyl-(1-&gt;4)-[alpha-L-fucosyl-(1-&gt;3)]-D-glucose + GDP + H(+). The enzyme catalyses alpha-L-Fuc-(1-&gt;2)-beta-D-Gal-(1-&gt;4)-D-Glc + GDP-beta-L-fucose = alpha-L-Fuc-(1-&gt;2)-beta-D-Gal-(1-&gt;4)-[alpha-L-Fuc-(1-&gt;3)]-D-Glc + GDP + H(+). The catalysed reaction is a beta-D-galactosyl-(1-&gt;4)-N-acetyl-beta-D-6-sulfooxy-glucosaminyl derivative + GDP-beta-L-fucose = a beta-D-galactosyl-(1-&gt;4)-[alpha-L-fucosyl-(1-&gt;3)]-N-acetyl-beta-D-6-sulfooxy-glucosaminyl derivative + GDP + H(+). Its pathway is protein modification; protein glycosylation. Functionally, catalyzes the transfer of L-fucose, from a guanosine diphosphate-beta-L-fucose, to the N-acetyl glucosamine (GlcNAc) of a distal alpha2,3 sialylated lactosamine unit of a glycoprotein- or glycolipid-linked sialopolylactosamines chain or of a distal or internal lactosamine unit of a neutral glycoprotein- or glycolipid-linked polylactosamines chain through an alpha-1,3 glycosidic linkage and participates in surface expression of the sialyl Lewis X (sLe(x)), Lewis X (Le(x)) and non sialylated VIM2 determinants. Moreover transfers fucose to H-type 2 (Fucalpha1-2Galbeta1-4GlcNAc) chain acceptor substrates and participates in difucosylated sialyl Lewis x determinants. Also fucosylates a polylactosamine substrate having a 6 sulfate modification at the GlcNAc moiety and gives rise to sialyl and non-sialyl 6-sulfo lewis X. Does not have activity towards type 1 ((Galbeta1-3GlcNAc)) and H-type 1 chain (Fucalpha1-2Galbeta1-3GlcNAc) acceptors substrates. The polypeptide is 4-galactosyl-N-acetylglucosaminide 3-alpha-L-fucosyltransferase FUT6 (Pongo pygmaeus (Bornean orangutan)).